The primary structure comprises 299 residues: tRNA dimethylallyltransferase (299 aa).

11-18 (GPTAVGKT) contributes to the ATP binding site. 13 to 18 (TAVGKT) serves as a coordination point for substrate. The segment at 36–39 (DSQQ) is interaction with substrate tRNA.

The protein belongs to the IPP transferase family. Monomer. Mg(2+) is required as a cofactor.

It catalyses the reaction adenosine(37) in tRNA + dimethylallyl diphosphate = N(6)-dimethylallyladenosine(37) in tRNA + diphosphate. Its function is as follows. Catalyzes the transfer of a dimethylallyl group onto the adenine at position 37 in tRNAs that read codons beginning with uridine, leading to the formation of N6-(dimethylallyl)adenosine (i(6)A). The protein is tRNA dimethylallyltransferase of Streptococcus pyogenes serotype M6 (strain ATCC BAA-946 / MGAS10394).